Consider the following 474-residue polypeptide: tRNA-2-methylthio-N(6)-dimethylallyladenosine synthase (474 aa).

The MTTase N-terminal domain maps to 3–120 (KKLHIKTWGC…LPEMINSVRG (118 aa)). 6 residues coordinate [4Fe-4S] cluster: cysteine 12, cysteine 49, cysteine 83, cysteine 157, cysteine 161, and cysteine 164. Residues 143–375 (RAEGPTAFVS…QERINQQAMA (233 aa)) form the Radical SAM core domain. In terms of domain architecture, TRAM spans 378–441 (RRMLGTTQRI…PNSLRGKVVR (64 aa)).

Belongs to the methylthiotransferase family. MiaB subfamily. In terms of assembly, monomer. Requires [4Fe-4S] cluster as cofactor.

It is found in the cytoplasm. The enzyme catalyses N(6)-dimethylallyladenosine(37) in tRNA + (sulfur carrier)-SH + AH2 + 2 S-adenosyl-L-methionine = 2-methylsulfanyl-N(6)-dimethylallyladenosine(37) in tRNA + (sulfur carrier)-H + 5'-deoxyadenosine + L-methionine + A + S-adenosyl-L-homocysteine + 2 H(+). It catalyses the reaction N(6)-dimethylallyladenosine(37) in tRNA + (sulfur carrier)-SH + AH2 + S-adenosyl-L-methionine = 2-thio-N(6)-dimethylallyladenosine(37) in tRNA + (sulfur carrier)-H + 5'-deoxyadenosine + L-methionine + A + H(+). It carries out the reaction 2-thio-N(6)-dimethylallyladenosine(37) in tRNA + S-adenosyl-L-methionine = 2-methylsulfanyl-N(6)-dimethylallyladenosine(37) in tRNA + S-adenosyl-L-homocysteine + H(+). Its function is as follows. Catalyzes the methylthiolation of N6-(dimethylallyl)adenosine (i(6)A), leading to the formation of 2-methylthio-N6-(dimethylallyl)adenosine (ms(2)i(6)A) at position 37 in tRNAs that read codons beginning with uridine. The sequence is that of tRNA-2-methylthio-N(6)-dimethylallyladenosine synthase from Salmonella typhimurium (strain LT2 / SGSC1412 / ATCC 700720).